The sequence spans 379 residues: 1-deoxy-D-xylulose 5-phosphate reductoisomerase (379 aa).

NADPH is bound by residues threonine 10, glycine 11, serine 12, isoleucine 13, asparagine 39, and asparagine 121. Lysine 122 contributes to the 1-deoxy-D-xylulose 5-phosphate binding site. Glutamate 123 is a binding site for NADPH. Aspartate 147 lines the Mn(2+) pocket. Positions 148, 149, 173, and 196 each coordinate 1-deoxy-D-xylulose 5-phosphate. Glutamate 149 contributes to the Mn(2+) binding site. Position 202 (glycine 202) interacts with NADPH. Serine 209, asparagine 214, lysine 215, and glutamate 218 together coordinate 1-deoxy-D-xylulose 5-phosphate. A Mn(2+)-binding site is contributed by glutamate 218.

Belongs to the DXR family. Mg(2+) is required as a cofactor. Mn(2+) serves as cofactor.

It catalyses the reaction 2-C-methyl-D-erythritol 4-phosphate + NADP(+) = 1-deoxy-D-xylulose 5-phosphate + NADPH + H(+). It participates in isoprenoid biosynthesis; isopentenyl diphosphate biosynthesis via DXP pathway; isopentenyl diphosphate from 1-deoxy-D-xylulose 5-phosphate: step 1/6. In terms of biological role, catalyzes the NADPH-dependent rearrangement and reduction of 1-deoxy-D-xylulose-5-phosphate (DXP) to 2-C-methyl-D-erythritol 4-phosphate (MEP). This is 1-deoxy-D-xylulose 5-phosphate reductoisomerase from Chlamydia pneumoniae (Chlamydophila pneumoniae).